Reading from the N-terminus, the 132-residue chain is Small ribosomal subunit protein uS8 (132 aa).

This sequence belongs to the universal ribosomal protein uS8 family. Part of the 30S ribosomal subunit. Contacts proteins S5 and S12.

One of the primary rRNA binding proteins, it binds directly to 16S rRNA central domain where it helps coordinate assembly of the platform of the 30S subunit. This chain is Small ribosomal subunit protein uS8, found in Enterococcus faecalis (strain ATCC 700802 / V583).